Consider the following 506-residue polypeptide: Serine/threonine-protein kinase D6PKL1 (506 aa).

The disordered stretch occupies residues 1–96; it reads MASKYGSGVL…TCSSFSGNNK (96 aa). A compositionally biased stretch (basic and acidic residues) spans 12–23; sequence ENKKEKGDKETP. Residues 24-54 show a composition bias toward polar residues; sequence ETSYSSQSVSVNTLADQVSSTLSFAPSSDSK. Residues 55-67 show a composition bias toward basic and acidic residues; that stretch reads TGGEVKFNEKSDQ. Over residues 77–92 the composition is skewed to low complexity; it reads STSSDISDESTCSSFS. A Protein kinase domain is found at 123–456; that stretch reads FRLLKRLGCG…ATEMKQHPFF (334 aa). Residues 129–137 and Lys-152 contribute to the ATP site; that span reads LGCGDIGTV. The active-site Proton acceptor is the Asp-248. A disordered region spans residues 475–495; that stretch reads PVDYESAPATPAAATSTSVKS. Positions 480–492 are enriched in low complexity; the sequence is SAPATPAAATSTS.

This sequence belongs to the protein kinase superfamily. AGC Ser/Thr protein kinase family.

The protein localises to the cell membrane. The catalysed reaction is L-seryl-[protein] + ATP = O-phospho-L-seryl-[protein] + ADP + H(+). It catalyses the reaction L-threonyl-[protein] + ATP = O-phospho-L-threonyl-[protein] + ADP + H(+). Protein kinase that regulates the auxin transport activity of PIN auxin efflux facilitators by direct phosphorylation. D6PK-mediated PIN phosphorylation promotes auxin transport in the hypocotyl and this is a prerequisite for PHOT1-dependent hypocotyl bending. The protein is Serine/threonine-protein kinase D6PKL1 (D6PKL1) of Arabidopsis thaliana (Mouse-ear cress).